A 145-amino-acid polypeptide reads, in one-letter code: Bacilliredoxin SH1401 (145 aa).

This sequence belongs to the bacilliredoxin family.

The polypeptide is Bacilliredoxin SH1401 (Staphylococcus haemolyticus (strain JCSC1435)).